Reading from the N-terminus, the 3317-residue chain is Cadherin-23 (3317 aa).

An N-terminal signal peptide occupies residues 1–23 (MRHPPVTWCAMLWLLMLVSGSWG). At 24-3062 (QVNRLPFFTN…SVQLPDDMSA (3039 aa)) the chain is on the extracellular side. Cadherin domains follow at residues 34–132 (HFFD…APTF), 133–236 (HNQP…DPIF), 237–348 (INLP…APEF), 349–458 (NSSE…RPIF), 459–559 (SQPL…VPTF), 560–669 (QKDA…PPTF), 670–782 (SKPA…APYY), 777–888 (KDAP…DPTF), 889–993 (QNLP…TPTF), 994–1100 (FPAV…RPIF), 1101–1206 (LQSS…APVF), 1208–1311 (QQQY…AVQF), 1312–1416 (SNAS…SPRF), 1418–1525 (FTSD…PPVI), 1527–1632 (SPFG…APVF), 1633–1742 (QQPH…VPTF), 1743–1849 (PRDY…DPVL), 1850–1957 (LNLP…HPLF), 1958–2067 (TEGT…WPTF), 2068–2172 (SPPA…RPEF), 2173–2291 (LNPI…TPQF), 2295–2400 (GITY…NPIF), 2401–2507 (DQLS…RPQF), 2508–2609 (SKPQ…RPVF), 2612–2720 (PPNG…EPLF), 2727–2844 (SPQY…PPRF), and 2845–2973 (TKAE…EEEF). N-linked (GlcNAc...) asparagine glycosylation is found at N155 and N206. N-linked (GlcNAc...) asparagine glycans are attached at residues N349, N391, N432, N464, N470, N600, N692, N763, N808, N825, N939, N999, N1016, N1169, N1280, N1313, N1471, N1532, N1649, N1665, N1816, N1855, N1887, N1900, N2012, N2048, N2127, N2166, N2193, N2261, N2355, and N2367. N2576, N2614, N2747, N2806, N2875, N2894, N2939, and N2979 each carry an N-linked (GlcNAc...) asparagine glycan. A helical membrane pass occupies residues 3063-3083 (LQMAIIVLAILLFLAAMLFVL). Residues 3084-3317 (MNWYYRTIHK…MESPLEITEL (234 aa)) are Cytoplasmic-facing.

As to quaternary structure, antiparallel heterodimer with PCDH15. Interacts with USH1C and USH1G.

Its subcellular location is the cell membrane. Its function is as follows. Cadherins are calcium-dependent cell adhesion proteins. They preferentially interact with themselves in a homophilic manner in connecting cells. CDH23 is required for establishing and/or maintaining the proper organization of the stereocilia bundle of hair cells in the cochlea and the vestibule during late embryonic/early postnatal development. It is part of the functional network formed by USH1C, USH1G, CDH23 and MYO7A that mediates mechanotransduction in cochlear hair cells. Required for normal hearing. The protein is Cadherin-23 (Cdh23) of Rattus norvegicus (Rat).